Here is a 207-residue protein sequence, read N- to C-terminus: Fibroblast growth factor 18 (207 aa).

The signal sequence occupies residues 1–27 (MYSAPSACTCLCLHFLLLCFQVQVLVA). An N-linked (GlcNAc...) asparagine glycan is attached at Asn39. Cysteines 109 and 127 form a disulfide. Asn137 is a glycosylation site (N-linked (GlcNAc...) asparagine). The tract at residues 157 to 186 (GRPRKGPKTRENQQDVHFMKRYPKGQPELQ) is disordered. Over residues 164–174 (KTRENQQDVHF) the composition is skewed to basic and acidic residues.

The protein belongs to the heparin-binding growth factors family. As to quaternary structure, interacts with FGFR3 and FGFR4.

Its subcellular location is the secreted. Plays an important role in the regulation of cell proliferation, cell differentiation and cell migration. Required for normal ossification and bone development. Stimulates hepatic and intestinal proliferation. This chain is Fibroblast growth factor 18 (FGF18), found in Homo sapiens (Human).